The chain runs to 70 residues: Putative defensin-like protein 280 (70 aa).

A signal peptide spans 1 to 23 (MASIKHFFLVFICVSVLLTSGLA). Cystine bridges form between Cys30/Cys53, Cys39/Cys65, and Cys43/Cys67.

It belongs to the DEFL family.

It localises to the secreted. The polypeptide is Putative defensin-like protein 280 (Arabidopsis thaliana (Mouse-ear cress)).